The following is a 244-amino-acid chain: 6-carboxyhexanoate--CoA ligase (244 aa).

Belongs to the BioW family. In terms of assembly, homodimer. The cofactor is Mg(2+).

The enzyme catalyses heptanedioate + ATP + CoA = 6-carboxyhexanoyl-CoA + AMP + diphosphate. It functions in the pathway metabolic intermediate metabolism; pimeloyl-CoA biosynthesis; pimeloyl-CoA from pimelate: step 1/1. Its function is as follows. Catalyzes the transformation of pimelate into pimeloyl-CoA with concomitant hydrolysis of ATP to AMP. The chain is 6-carboxyhexanoate--CoA ligase from Methanococcus maripaludis (strain C6 / ATCC BAA-1332).